The following is a 398-amino-acid chain: Phosphoglycerate kinase (398 aa).

Residues 22–24 (DFN), Arg38, 61–64 (HLGR), Arg120, and Arg153 contribute to the substrate site. ATP is bound by residues Lys206, Gly297, Glu328, and 354-357 (GGDT).

This sequence belongs to the phosphoglycerate kinase family. Monomer.

The protein resides in the cytoplasm. It catalyses the reaction (2R)-3-phosphoglycerate + ATP = (2R)-3-phospho-glyceroyl phosphate + ADP. Its pathway is carbohydrate degradation; glycolysis; pyruvate from D-glyceraldehyde 3-phosphate: step 2/5. In Nautilia profundicola (strain ATCC BAA-1463 / DSM 18972 / AmH), this protein is Phosphoglycerate kinase.